A 503-amino-acid polypeptide reads, in one-letter code: Cobyric acid synthase (503 aa).

The region spanning 251 to 450 (DLDIAVIRLP…IHGIFENAAF (200 aa)) is the GATase cobBQ-type domain. Cysteine 331 functions as the Nucleophile in the catalytic mechanism. Histidine 442 is an active-site residue.

This sequence belongs to the CobB/CobQ family. CobQ subfamily.

It functions in the pathway cofactor biosynthesis; adenosylcobalamin biosynthesis. In terms of biological role, catalyzes amidations at positions B, D, E, and G on adenosylcobyrinic A,C-diamide. NH(2) groups are provided by glutamine, and one molecule of ATP is hydrogenolyzed for each amidation. This chain is Cobyric acid synthase, found in Dehalococcoides mccartyi (strain ATCC BAA-2100 / JCM 16839 / KCTC 5957 / BAV1).